The chain runs to 593 residues: Dihydroxy-acid dehydratase (593 aa).

Residues 1–17 (MSQQTEPDDDAALDGDE) show a composition bias toward acidic residues. A disordered region spans residues 1–40 (MSQQTEPDDDAALDGDEPGAYGKDERLRSREVTEGPERAP). Residues 22 to 40 (GKDERLRSREVTEGPERAP) are compositionally biased toward basic and acidic residues. Cys72 contacts [2Fe-2S] cluster. A Mg(2+)-binding site is contributed by Asp104. Cys145 lines the [2Fe-2S] cluster pocket. Mg(2+) contacts are provided by Asp146 and Lys147. Lys147 is modified (N6-carboxylysine). Cys217 is a binding site for [2Fe-2S] cluster. Glu475 contributes to the Mg(2+) binding site. Ser501 acts as the Proton acceptor in catalysis.

Belongs to the IlvD/Edd family. In terms of assembly, homodimer. Requires [2Fe-2S] cluster as cofactor. It depends on Mg(2+) as a cofactor.

It carries out the reaction (2R)-2,3-dihydroxy-3-methylbutanoate = 3-methyl-2-oxobutanoate + H2O. It catalyses the reaction (2R,3R)-2,3-dihydroxy-3-methylpentanoate = (S)-3-methyl-2-oxopentanoate + H2O. It participates in amino-acid biosynthesis; L-isoleucine biosynthesis; L-isoleucine from 2-oxobutanoate: step 3/4. The protein operates within amino-acid biosynthesis; L-valine biosynthesis; L-valine from pyruvate: step 3/4. In terms of biological role, functions in the biosynthesis of branched-chain amino acids. Catalyzes the dehydration of (2R,3R)-2,3-dihydroxy-3-methylpentanoate (2,3-dihydroxy-3-methylvalerate) into 2-oxo-3-methylpentanoate (2-oxo-3-methylvalerate) and of (2R)-2,3-dihydroxy-3-methylbutanoate (2,3-dihydroxyisovalerate) into 2-oxo-3-methylbutanoate (2-oxoisovalerate), the penultimate precursor to L-isoleucine and L-valine, respectively. The protein is Dihydroxy-acid dehydratase of Natronomonas pharaonis (strain ATCC 35678 / DSM 2160 / CIP 103997 / JCM 8858 / NBRC 14720 / NCIMB 2260 / Gabara) (Halobacterium pharaonis).